Here is a 340-residue protein sequence, read N- to C-terminus: Ketol-acid reductoisomerase (NADP(+)) (340 aa).

The KARI N-terminal Rossmann domain occupies 3 to 182 (VQMEYEKDVK…GAARVGLLET (180 aa)). NADP(+)-binding positions include 26–29 (YGSQ), Arg-49, Ser-53, and 83–86 (DEIQ). The active site involves His-108. Gly-134 is a binding site for NADP(+). A KARI C-terminal knotted domain is found at 183–328 (TYKEETEEDL…AELRKAMPFV (146 aa)). Mg(2+) is bound by residues Asp-191, Glu-195, Glu-227, and Glu-231. Ser-252 provides a ligand contact to substrate.

Belongs to the ketol-acid reductoisomerase family. Mg(2+) is required as a cofactor.

It carries out the reaction (2R)-2,3-dihydroxy-3-methylbutanoate + NADP(+) = (2S)-2-acetolactate + NADPH + H(+). The catalysed reaction is (2R,3R)-2,3-dihydroxy-3-methylpentanoate + NADP(+) = (S)-2-ethyl-2-hydroxy-3-oxobutanoate + NADPH + H(+). The protein operates within amino-acid biosynthesis; L-isoleucine biosynthesis; L-isoleucine from 2-oxobutanoate: step 2/4. It functions in the pathway amino-acid biosynthesis; L-valine biosynthesis; L-valine from pyruvate: step 2/4. Involved in the biosynthesis of branched-chain amino acids (BCAA). Catalyzes an alkyl-migration followed by a ketol-acid reduction of (S)-2-acetolactate (S2AL) to yield (R)-2,3-dihydroxy-isovalerate. In the isomerase reaction, S2AL is rearranged via a Mg-dependent methyl migration to produce 3-hydroxy-3-methyl-2-ketobutyrate (HMKB). In the reductase reaction, this 2-ketoacid undergoes a metal-dependent reduction by NADPH to yield (R)-2,3-dihydroxy-isovalerate. In Streptococcus pneumoniae (strain CGSP14), this protein is Ketol-acid reductoisomerase (NADP(+)).